The primary structure comprises 78 residues: Cytochrome c oxidase subunit 6b-2 (78 aa).

Residues 22–65 enclose the CHCH domain; the sequence is TRHCFTRYIEFHRCTTAKGEESNDCERFAKYYRALCPGEWVDKW. Positions 25 to 35 match the Cx9C motif motif; it reads CFTRYIEFHRC. 2 cysteine pairs are disulfide-bonded: Cys-25–Cys-57 and Cys-35–Cys-46. Residues 46-57 carry the Cx10C motif motif; it reads CERFAKYYRALC.

This sequence belongs to the cytochrome c oxidase subunit 6B (TC 3.D.4.8) family. In terms of tissue distribution, specifically expressed in roots.

The protein resides in the mitochondrion. Its function is as follows. This protein is one of the nuclear-coded polypeptide chains of cytochrome c oxidase, the terminal oxidase in mitochondrial electron transport. This protein may be one of the heme-binding subunits of the oxidase. This Arabidopsis thaliana (Mouse-ear cress) protein is Cytochrome c oxidase subunit 6b-2 (COX6B-2).